A 2094-amino-acid chain; its full sequence is Nuclear mitotic apparatus protein 1 (2094 aa).

Residues 1 to 210 (MTLHATRAAT…SPMGDILQTP (210 aa)) form a head (Globular) region. Position 160 is a phosphoserine (Ser-160). Thr-161 carries the post-translational modification Phosphothreonine. Ser-167 and Ser-201 each carry phosphoserine. A Phosphothreonine modification is found at Thr-209. Positions 211–1681 (QFQMRRLKKQ…ADQQLRDLGK (1471 aa)) form a coiled coil. Ser-269 carries the post-translational modification Phosphoserine. Lys-377 is modified (N6-acetyllysine). Phosphoserine occurs at positions 386 and 398. Lys-443 is modified (N6-acetyllysine). Disordered stretches follow at residues 617–636 (QLQA…TQAQ) and 723–759 (LKEQ…AGRK). Residues 627–636 (NAQTSVTQAQ) are compositionally biased toward polar residues. N6-acetyllysine is present on Lys-878. 3 disordered regions span residues 921–1000 (SLEL…TQER), 1081–1143 (LVKK…EGLT), and 1173–1223 (ELGH…SSLI). Residues 935 to 951 (ASDQLGEQQGRPFSSTH) are compositionally biased toward polar residues. Composition is skewed to basic and acidic residues over residues 956 to 972 (AMER…ERLR) and 983 to 998 (QEER…RLTQ). Ser-1183 carries the post-translational modification Phosphoserine. Positions 1194–1206 (KAQDHSKAEEEWK) are enriched in basic and acidic residues. Ser-1221 bears the Phosphoserine mark. N6-acetyllysine is present on Lys-1507. Ser-1583 carries the phosphoserine modification. A Glycyl lysine isopeptide (Lys-Gly) (interchain with G-Cter in SUMO2) cross-link involves residue Lys-1681. The segment at 1681-1858 (KFQVATDALK…NSALLSLPGY (178 aa)) is membrane-binding domain 1. The interval 1682–2094 (FQVATDALKS…TPRAKGKVKH (413 aa)) is tail (Globular). Phosphoserine is present on residues Ser-1703, Ser-1706, and Ser-1710. Residues 1718 to 1743 (SVASKLPRTQPDGTSVPGEPASPISQ) are disordered. A Tankyrase-binding domain motif is present at residues 1724–1730 (PRTQPDG). A phosphoserine mark is found at Ser-1739 and Ser-1742. Lys-1748 participates in a covalent cross-link: Glycyl lysine isopeptide (Lys-Gly) (interchain with G-Cter in SUMO1); alternate. Lys-1748 participates in a covalent cross-link: Glycyl lysine isopeptide (Lys-Gly) (interchain with G-Cter in SUMO2); alternate. Ser-1751 carries the post-translational modification Phosphoserine. Ser-1754 carries the post-translational modification Phosphoserine; by PLK1. Tyr-1756 is modified (phosphotyrosine). Thr-1758 carries the post-translational modification Phosphothreonine. The segment at 1760–1795 (TPARGQAPLETSLDSLGDAFPDSGRKTRSARRRTTQ) is disordered. Positions 1770 to 1792 (TSLDSLGDAFPDSGRKTRSARRR) are 4.1-binding domain. Ser-1771 carries the phosphoserine; by PLK1 modification. Residues Ser-1774 and Ser-1782 each carry the phosphoserine modification. Thr-1786 carries the phosphothreonine modification. Lys-1804 is covalently cross-linked (Glycyl lysine isopeptide (Lys-Gly) (interchain with G-Cter in SUMO2)). Disordered stretches follow at residues 1807 to 1883 (LEEP…GRNS) and 1937 to 2094 (EMKT…KVKH). Phosphoserine is present on residues Ser-1812 and Ser-1815. Residues 1812 to 1839 (SANSSFYSTQSAPASQANLRATSSTQSL) are compositionally biased toward polar residues. Ser-1816 is modified (phosphoserine; by PLK1). Tyr-1818 is modified (phosphotyrosine). Ser-1822 is modified (phosphoserine). Position 1826 is a phosphoserine; alternate (Ser-1826). Ser-1826 carries an O-linked (GlcNAc) serine; alternate glycan. Phosphoserine is present on residues Ser-1844 and Ser-1869. The tubulin-binding domain stretch occupies residues 1864–1967 (SSARRSQARM…AEGVGITTRQ (104 aa)). The GPSM2-binding domain stretch occupies residues 1874–1908 (SSGAPQGRNSFYMGTCQDEPEQLDDWNRIAELQQR). Over residues 1937-1948 (EMKTGDPRETLR) the composition is skewed to basic and acidic residues. Residue Ser-1951 is modified to Phosphoserine. Residues 1963–2042 (ITTRQQRKRV…SILNTPKKLG (80 aa)) are membrane-binding domain 2. Positions 1966–1971 (RQQRKR) match the Nuclear localization signal motif. A phosphoserine mark is found at Ser-1973 and Ser-1974. Phosphothreonine is present on Thr-1982. Residue Ser-1985 is modified to Phosphoserine. Thr-1997 is modified (phosphothreonine; by CDK1). The segment covering 1997-2006 (TPRDRHEGRK) has biased composition (basic and acidic residues). Ser-2029 carries the phosphoserine modification. Thr-2037 carries the post-translational modification Phosphothreonine. Residues Ser-2044 and Ser-2059 each carry the phosphoserine modification. The residue at position 2069 (Ser-2069) is a Phosphoserine; by CDK1. A compositionally biased stretch (low complexity) spans 2073–2085 (ATTTTGTATVATT). Position 2085 is a phosphothreonine; by CDK1 (Thr-2085).

As to quaternary structure, homodimer. Also forms multiarm oligomers by association of C-terminal tail domains, oligomers may further assemble to form a hexagonal nuclear lattice-like network. Associates with the dynein-dynactin complex; this association promotes the transport and accumulation of NUMA1 at the mitotic spindle poles that is inhibited by the BRISC complex in a PLK1-dependent manner. Part of a spindle orientation complex at least composed of GNAI1, GPSM2 and NUMA1. Interacts (via C-terminus) with microtubules (MTs); this interaction is direct and promotes both MT bundle formation and stability in a dynein-dynactin complex- and CDK1-independent manner. Interacts with EPB41 and EPB41L2; these interactions are negatively regulated by CDK1 during metaphase and are important for anaphase-specific localization of NUMA1 in symmetrically dividing cells. Interacts (via C-terminus) with GPSM2 (via TPR repeats); this interaction is direct, prevented by competitive binding of INSC, is inhibited in a PLK1-dependent manner, blocks the association of NUMA1 with MTs and inhibits NUMA1-induced MT bundle formation, prevents the association of NUMA1 with SPAG5, induces mitotic spindle pole localization of GPSM2, both metaphase cell cortex localization of NUMA1 and mitotic spindle organization. Does not interact with GPSM2 during anaphase. Interacts (via C-terminus) with the nuclear importin alpha/importin beta receptor; this interaction is inhibited by RanGTP. Interacts (via C-terminus) with KPNB1; this interaction is inhibited by RanGTP and the BRISC complex. Interacts with ABRAXAS2 and the BRISC complex; these interactions regulate mitotic spindle assembly. Interacts (via N-terminal end of the coiled-coil domain) with RAE1; this interaction promotes mitotic spindle formation. Interacts (via C-terminus) with SPAG5 (via C-terminus); this interaction promotes the recruitment of SPAG5 to the MTs at spindle poles in a dynein-dynactin-dependent manner and regulates mitotic spindle organization and proper chromosome alignment during mitosis. Interacts with TNKS; this interaction occurs at the onset of mitosis. Interacts with TNKS2. Interacts with tubulin. Interacts with KHDC3 (via C-terminus). Post-translationally, phosphorylation and dephosphorylation on Thr-2037 regulates the extent of cortical NUMA1 and the dynein-dynactin complex localization during mitotic metaphase and anaphase. In metaphase, phosphorylation on Thr-2037 occurs in a kinase CDK1-dependent manner; this phosphorylation maintains low levels of cortical dynein-dynactin complex at metaphase, and hence proper spindle positioning. In anaphase, dephosphorylated on Thr-2037 by phosphatase PPP2CA; this dephosphorylation stimulates its membrane association and with the dynein-dynactin complex its enrichment at the cell cortex, and hence robust spindle elongation. Probably also phosphorylated on Thr-1997 and Ser-2069 by CDK1; these phosphorylations may regulate its cell cortex recruitment during metaphase and anaphase. Phosphorylated on Ser-1751, Ser-1754, Ser-1771 and Ser-1816 by PLK1; these phosphorylations induce cortical dynein-dynactin complex dissociation from the NUMA1-GPSM2 complex and negatively regulates cortical dynein-dynactin complex localization. ADP-ribosylated by TNKS at the onset of mitosis; ADP-ribosylation is not required for its localization to spindle poles. In terms of processing, O-glycosylated during cytokinesis at sites identical or close to phosphorylation sites, this interferes with the phosphorylation status. Post-translationally, ubiquitinated with 'Lys-63'-linked polyubiquitin chains. Deubiquitination by the BRISC complex is important for the incorporation of NUMA1 into mitotic spindle poles and normal spindle pole function, probably by modulating interactions between NUMA1, dynein-dynactin complex and importin-beta. As to expression, expressed in testis, speen, liver, lung, spinal cord and brain. Expressed in Purkinje neurons (at protein level).

The protein localises to the nucleus. Its subcellular location is the nucleoplasm. It localises to the nucleus matrix. The protein resides in the chromosome. It is found in the cytoplasm. The protein localises to the cytoskeleton. Its subcellular location is the microtubule organizing center. It localises to the centrosome. The protein resides in the spindle pole. It is found in the cell cortex. The protein localises to the cell membrane. Its subcellular location is the lateral cell membrane. Functionally, microtubule (MT)-binding protein that plays a role in the formation and maintenance of the spindle poles and the alignement and the segregation of chromosomes during mitotic cell division. Functions to tether the minus ends of MTs at the spindle poles, which is critical for the establishment and maintenance of the spindle poles. Plays a role in the establishment of the mitotic spindle orientation during metaphase and elongation during anaphase in a dynein-dynactin-dependent manner. In metaphase, part of a ternary complex composed of GPSM2 and G(i) alpha proteins, that regulates the recruitment and anchorage of the dynein-dynactin complex in the mitotic cell cortex regions situated above the two spindle poles, and hence regulates the correct oritentation of the mitotic spindle. During anaphase, mediates the recruitment and accumulation of the dynein-dynactin complex at the cell membrane of the polar cortical region through direct association with phosphatidylinositol 4,5-bisphosphate (PI(4,5)P2), and hence participates in the regulation of the spindle elongation and chromosome segregation. Also binds to other polyanionic phosphoinositides, such as phosphatidylinositol 3-phosphate (PIP), lysophosphatidic acid (LPA) and phosphatidylinositol triphosphate (PIP3), in vitro. Also required for proper orientation of the mitotic spindle during asymmetric cell divisions. Plays a role in mitotic MT aster assembly. Involved in anastral spindle assembly. Positively regulates TNKS protein localization to spindle poles in mitosis. Highly abundant component of the nuclear matrix where it may serve a non-mitotic structural role, occupies the majority of the nuclear volume. Required for epidermal differentiation and hair follicle morphogenesis. The chain is Nuclear mitotic apparatus protein 1 from Mus musculus (Mouse).